The following is a 235-amino-acid chain: Small ribosomal subunit protein uS2 (235 aa).

It belongs to the universal ribosomal protein uS2 family.

This Geobacillus stearothermophilus (Bacillus stearothermophilus) protein is Small ribosomal subunit protein uS2 (rpsB).